Consider the following 404-residue polypeptide: uncharacterized protein (404 aa).

8 consecutive transmembrane segments (helical) span residues 1-21 (MNVL…FLFS), 32-52 (VIVG…WEAG), 89-109 (AFAL…AVLY), 182-202 (LFGY…SFMA), 261-281 (LAFV…FGLF), 285-305 (GVTL…LIGV), 344-364 (ATII…AIML), and 384-404 (KAVL…GMFI).

This sequence belongs to the concentrative nucleoside transporter (CNT) (TC 2.A.41) family.

The protein localises to the cell membrane. This is an uncharacterized protein from Bacillus subtilis (strain 168).